The chain runs to 323 residues: Arginase (323 aa).

Mn(2+)-binding residues include His119, Asp142, His144, and Asp146. Residues 144-148 (HADIN), 155-157 (SKN), and Asp198 each bind substrate. The Mn(2+) site is built by Asp247 and Asp249. 2 residues coordinate substrate: Thr261 and Glu292.

Belongs to the arginase family. In terms of assembly, homotrimer. Mn(2+) serves as cofactor.

It catalyses the reaction L-arginine + H2O = urea + L-ornithine. The protein operates within nitrogen metabolism; urea cycle; L-ornithine and urea from L-arginine: step 1/1. This is Arginase (car1) from Schizosaccharomyces pombe (strain 972 / ATCC 24843) (Fission yeast).